The sequence spans 300 residues: MKIGVIMGGISTEREVSLNSGREVIKYLELLEHEIIPIIIDKKEDVMEKAKGIDFAFLALHGKFGEDGTVQSVLQTLDIPYSGCGPLTSAICMDKDMTKKILKYANINTADWVNVTNAEDIDYEAIEKIGYPVFVKPNSGGSSVATNLVKNKEGIKEAVELALKYDKEVMIENYTKGEEITCCMLNGKMLPVLAIRPHAEFFDYTAKYADGGSDEVVIELEENLHKKVEEMALACWKELKCEVYVRVDMIVKEGVPYVLELNTLPGMTKNSLFPKSANAVGISFAELLNSIVKYSLEVER.

The region spanning 99-293 (KKILKYANIN…FAELLNSIVK (195 aa)) is the ATP-grasp domain. 126 to 181 (IEKIGYPVFVKPNSGGSSVATNLVKNKEGIKEAVELALKYDKEVMIENYTKGEEIT) contacts ATP. Mg(2+)-binding residues include Asp-248, Glu-260, and Asn-262.

This sequence belongs to the D-alanine--D-alanine ligase family. It depends on Mg(2+) as a cofactor. Mn(2+) is required as a cofactor.

The protein localises to the cytoplasm. It carries out the reaction 2 D-alanine + ATP = D-alanyl-D-alanine + ADP + phosphate + H(+). It functions in the pathway cell wall biogenesis; peptidoglycan biosynthesis. In terms of biological role, cell wall formation. The polypeptide is D-alanine--D-alanine ligase (Clostridium botulinum (strain Loch Maree / Type A3)).